The chain runs to 101 residues: Small ribosomal subunit protein uS14A (101 aa).

Positions 28–57 are disordered; it reads KDIIRSPSSAPEQRSTAQRALARQPRDASP. Residues 33–45 are compositionally biased toward polar residues; sequence SPSSAPEQRSTAQ.

Belongs to the universal ribosomal protein uS14 family. As to quaternary structure, part of the 30S ribosomal subunit. Contacts proteins S3 and S10.

In terms of biological role, binds 16S rRNA, required for the assembly of 30S particles and may also be responsible for determining the conformation of the 16S rRNA at the A site. This is Small ribosomal subunit protein uS14A from Mycobacterium bovis (strain ATCC BAA-935 / AF2122/97).